A 538-amino-acid polypeptide reads, in one-letter code: D-alanyl-D-alanine carboxypeptidase (538 aa).

The interval 1-21 (MKQSSPEPLRPRRTGGRGGAR) is disordered. Positions 1-49 (MKQSSPEPLRPRRTGGRGGARRAAALVTIPLLPMTLLGASPALADASGA) are cleaved as a signal peptide. The active-site Acyl-ester intermediate is the Ser98. Lys101 serves as the catalytic Proton acceptor. Positions 146-319 (TLSAEDLDAM…KGDVGLGGVP (174 aa)) are absent in class-A beta-lactamases. Residue Ser347 is part of the active site. Lys459 provides a ligand contact to substrate. Positions 516–538 (GARMMRGPVQGSGELECSWVQAC) are cleaved as a propeptide — removed in mature form.

This sequence belongs to the peptidase S13 family.

It localises to the secreted. The catalysed reaction is Preferential cleavage: (Ac)2-L-Lys-D-Ala-|-D-Ala. Also transpeptidation of peptidyl-alanyl moieties that are N-acyl substituents of D-alanine.. The protein operates within cell wall biogenesis; peptidoglycan biosynthesis. Its activity is regulated as follows. Inhibited by benzylpenicillin, cephaloridine, ampicillin and cetiofur. Removes C-terminal D-alanyl residues from sugar-peptide cell wall precursors. This Actinomadura sp. (strain R39) protein is D-alanyl-D-alanine carboxypeptidase (dac).